Reading from the N-terminus, the 694-residue chain is Phosphatase and actin regulator 4-A (694 aa).

Composition is skewed to basic and acidic residues over residues 1-13 (MEDRSEEGGDHSE) and 46-72 (SSDSFRETSEVLERKISTRKPREELIK). Disordered regions lie at residues 1–29 (MEDRSEEGGDHSEMPSAPSTPPSKRKSKF), 42–169 (RKRK…QPLP), 192–403 (VNEV…HIRI), 426–445 (LFMQNDMGPSEEGTRVRSLP), and 450–572 (LLKV…QIRQ). The stretch at 55–80 (EVLERKISTRKPREELIKRGLLVEVP) is one RPEL 1 repeat. Residues 240-267 (SISTSVTQESAVAGQKSDSSNRLQSSAP) are compositionally biased toward polar residues. Residues 300 to 317 (AELSLALAGSPLSPAGSR) are compositionally biased toward low complexity. 2 stretches are compositionally biased toward pro residues: residues 318–327 (PSPPLPPKRA) and 372–381 (SNPPVPPLTL). Acidic residues-rich tracts occupy residues 455-467 (DDEDDESLEDESL), 499-511 (QEEEEGGVSDTDS), and 519-529 (DDEEEEEEEET). RPEL repeat units lie at residues 576–601 (TQLNRRLSQRPTAEELEQRNILQKNE) and 613–638 (RRLTRKLSQRPTVAELVERKILRFNE).

Belongs to the phosphatase and actin regulator family. As to quaternary structure, binds ppp1ca and actin.

It is found in the cytoplasm. The protein resides in the cell projection. Its subcellular location is the lamellipodium. In terms of biological role, regulator of protein phosphatase 1 (PP1) required for neural tube and optic fissure closure, and enteric neural crest cell (ENCCs) migration during development. Acts as an activator of PP1. During neural tube closure, localizes to the ventral neural tube and activates PP1, leading to down-regulate cell proliferation within cranial neural tissue and the neural retina. Also acts as a regulator of migration of enteric neural crest cells (ENCCs) by activating PP1, leading to repression of the integrin signaling through the rho/rock pathway. The protein is Phosphatase and actin regulator 4-A (phactr4-a) of Xenopus laevis (African clawed frog).